We begin with the raw amino-acid sequence, 141 residues long: Eukaryotic translation initiation factor 1A (141 aa).

Over residues 1 to 15 (MPKNKGKGGKNRRRG) the composition is skewed to basic residues. The disordered stretch occupies residues 1 to 28 (MPKNKGKGGKNRRRGKNENEQKRELQFK). Basic and acidic residues predominate over residues 16 to 28 (KNENEQKRELQFK). The region spanning 21-95 (QKRELQFKEE…DKADVILRYN (75 aa)) is the S1-like domain.

It belongs to the eIF-1A family.

Seems to be required for maximal rate of protein biosynthesis. Enhances ribosome dissociation into subunits and stabilizes the binding of the initiator Met-tRNA(I) to 40 S ribosomal subunits. The polypeptide is Eukaryotic translation initiation factor 1A (eif1a) (Dictyostelium discoideum (Social amoeba)).